We begin with the raw amino-acid sequence, 798 residues long: MALHSPQYIFGDFSPDEFNQFFVTPRSSVELPPYSGTVLCGTQAVDKLPDGQEYQRIEFGVDEVIEPSDTLPRTPSYSISSTLNPQAPEFILGCTASKITPDGITKEASYGSIDCQYPGSALALDGSSNVEAEVLENDGVSGGLGQRERKKKKKRPPGYYSYLKDGGDDSISTEALVNGHANSAVPNSVSAEDAEFMGDMPPSVTPRTCNSPQNSTDSVSDIVPDSPFPGALGSDTRTAGQPEGGPGADFGQSCFPAEAGRDTLSRTAGAQPCVGTDTTENLGVANGQILESSGEGTATNGVELHTTESIDLDPTKPESASPPADGTGSASGTLPVSQPKSWASLFHDSKPSSSSPVAYVETKYSPPAISPLVSEKQVEVKEGLVPVSEDPVAIKIAELLENVTLIHKPVSLQPRGLINKGNWCYINATLQALVACPPMYHLMKFIPLYSKVQRPCTSTPMIDSFVRLMNEFTNMPVPPKPRQALGDKIVRDIRPGAAFEPTYIYRLLTVNKSSLSEKGRQEDAEEYLGFILNGLHEEMLNLKKLLSPSNEKLTISNGPKNHSVNEEEQEEQGEGSEDEWEQVGPRNKTSVTRQADFVQTPITGIFGGHIRSVVYQQSSKESATLQPFFTLQLDIQSDKIRTVQDALESLVARESVQGYTTKTKQEVEISRRVTLEKLPPVLVLHLKRFVYEKTGGCQKLIKNIEYPVDLEISKELLSPGVKNKNFKCHRTYRLFAVVYHHGNSATGGHYTTDVFQIGLNGWLRIDDQTVKVINQYQVVKPTAERTAYLLYYRRVDLL.

Residue Ala-2 is modified to N-acetylalanine. An interaction with p53/TP53 region spans residues Ala-2–Thr-100. The segment at Pro-6–Phe-21 is G3BP1-binding. Phosphothreonine is present on Thr-24. Thr-42 carries the phosphothreonine; by ATM modification. Thr-100 is subject to Phosphothreonine. 3 disordered regions span residues Gly-139–Gly-166, Ala-194–Ala-257, and Thr-307–Ser-337. A compositionally biased stretch (polar residues) spans Thr-205–Val-219. Ser-211 and Ser-226 each carry phosphoserine. A compositionally biased stretch (basic and acidic residues) spans Thr-307–Lys-316. A Phosphoserine modification is found at Ser-321. Residues Gly-328 to Ser-337 are compositionally biased toward polar residues. Ser-337 is subject to Phosphoserine; by ATM. Phosphoserine occurs at positions 365 and 370. In terms of domain architecture, USP spans Arg-415–Val-795. Cys-424 acts as the Nucleophile in catalysis. Residue Ser-547 is modified to Phosphoserine. Polar residues predominate over residues Glu-551 to His-562. Residues Glu-551–Gln-594 form a disordered region. 2 positions are modified to phosphoserine: Ser-563 and Ser-576. Residues Glu-566–Glu-581 show a composition bias toward acidic residues. Catalysis depends on His-749, which acts as the Proton acceptor.

The protein belongs to the peptidase C19 family. USP10 subfamily. Found in a deubiquitination complex with TANK, USP10 and ZC3H12A; this complex inhibits genotoxic stress- or interleukin-1-beta (IL1B)-mediated NF-kappa-B activation by promoting IKBKG or TRAF6 deubiquitination. Interacts with IKBKG; this interaction increases in response to DNA damage. Interacts with TANK; this interaction increases in response to DNA damage. Interacts with TRAF6; this interaction increases in response to DNA damage. Interacts with ZC3H12A; this interaction increases in response to DNA damage. Interacts with G3BP1 (via NTF2 domain) and G3BP2 (via NTF2 domain); inhibiting stress granule formation. In terms of processing, phosphorylated by ATM following DNA damage, leading to stabilization and translocation it to the nucleus. Post-translationally, ubiquitinated. Deubiquitinated by USP13. Widely expressed.

It is found in the cytoplasm. The protein resides in the nucleus. It localises to the early endosome. It catalyses the reaction Thiol-dependent hydrolysis of ester, thioester, amide, peptide and isopeptide bonds formed by the C-terminal Gly of ubiquitin (a 76-residue protein attached to proteins as an intracellular targeting signal).. With respect to regulation, specifically inhibited by spautin-1 (specific and potent autophagy inhibitor-1), a derivative of MBCQ that binds to USP10 and inhibits deubiquitinase activity. Regulated by PIK3C3/VPS34-containing complexes. In terms of biological role, hydrolase that can remove conjugated ubiquitin from target proteins such as p53/TP53, RPS2/us5, RPS3/us3, RPS10/eS10, BECN1, SNX3 and CFTR. Acts as an essential regulator of p53/TP53 stability: in unstressed cells, specifically deubiquitinates p53/TP53 in the cytoplasm, leading to counteract MDM2 action and stabilize p53/TP53. Following DNA damage, translocates to the nucleus and deubiquitinates p53/TP53, leading to regulate the p53/TP53-dependent DNA damage response. Component of a regulatory loop that controls autophagy and p53/TP53 levels: mediates deubiquitination of BECN1, a key regulator of autophagy, leading to stabilize the PIK3C3/VPS34-containing complexes. In turn, PIK3C3/VPS34-containing complexes regulate USP10 stability, suggesting the existence of a regulatory system by which PIK3C3/VPS34-containing complexes regulate p53/TP53 protein levels via USP10 and USP13. Does not deubiquitinate MDM2. Plays a key role in 40S ribosome subunit recycling when a ribosome has stalled during translation: acts both by inhibiting formation of stress granules, which store stalled translation pre-initiation complexes, and mediating deubiquitination of 40S ribosome subunits. Acts as a negative regulator of stress granules formation by lowering G3BP1 and G3BP2 valence, thereby preventing G3BP1 and G3BP2 ability to undergo liquid-liquid phase separation (LLPS) and assembly of stress granules. Promotes 40S ribosome subunit recycling following ribosome dissociation in response to ribosome stalling by mediating deubiquitination of 40S ribosomal proteins RPS2/us5, RPS3/us3 and RPS10/eS10, thereby preventing their degradation by the proteasome. Part of a ribosome quality control that takes place when ribosomes have stalled during translation initiation (iRQC): USP10 acts by removing monoubiquitination of RPS2/us5 and RPS3/us3, promoting 40S ribosomal subunit recycling. Deubiquitinates CFTR in early endosomes, enhancing its endocytic recycling. Involved in a TANK-dependent negative feedback response to attenuate NF-kappa-B activation via deubiquitinating IKBKG or TRAF6 in response to interleukin-1-beta (IL1B) stimulation or upon DNA damage. Deubiquitinates TBX21 leading to its stabilization. Plays a negative role in the RLR signaling pathway upon RNA virus infection by blocking the RIGI-mediated MAVS activation. Mechanistically, removes the unanchored 'Lys-63'-linked polyubiquitin chains of MAVS to inhibit its aggregation, essential for its activation. The protein is Ubiquitin carboxyl-terminal hydrolase 10 of Homo sapiens (Human).